The chain runs to 274 residues: Aspartate/glutamate leucyltransferase (274 aa).

This sequence belongs to the R-transferase family. Bpt subfamily.

Its subcellular location is the cytoplasm. The enzyme catalyses N-terminal L-glutamyl-[protein] + L-leucyl-tRNA(Leu) = N-terminal L-leucyl-L-glutamyl-[protein] + tRNA(Leu) + H(+). It catalyses the reaction N-terminal L-aspartyl-[protein] + L-leucyl-tRNA(Leu) = N-terminal L-leucyl-L-aspartyl-[protein] + tRNA(Leu) + H(+). Its function is as follows. Functions in the N-end rule pathway of protein degradation where it conjugates Leu from its aminoacyl-tRNA to the N-termini of proteins containing an N-terminal aspartate or glutamate. The polypeptide is Aspartate/glutamate leucyltransferase (Ruegeria sp. (strain TM1040) (Silicibacter sp.)).